A 378-amino-acid chain; its full sequence is O-glycoside alpha-1,2-mannosyltransferase homolog 3 (378 aa).

The Cytoplasmic portion of the chain corresponds to Met1–Ser6. The helical; Signal-anchor for type II membrane protein transmembrane segment at Ser7–Ser24 threads the bilayer. Over Ser25–Ser378 the chain is Lumenal. The active-site Nucleophile is Glu276.

This sequence belongs to the glycosyltransferase 15 family.

It localises to the endoplasmic reticulum membrane. It is found in the golgi apparatus membrane. In terms of biological role, probable mannosyltransferase involved in O-glycosylation of cell wall and secreted proteins. The chain is O-glycoside alpha-1,2-mannosyltransferase homolog 3 (omh3) from Schizosaccharomyces pombe (strain 972 / ATCC 24843) (Fission yeast).